Consider the following 292-residue polypeptide: S-methyl-5'-thioadenosine phosphorylase (292 aa).

Residues Ser11, 53–54 (RH), and 86–87 (SA) contribute to the phosphate site. Met184 is a substrate binding site. Thr185 contacts phosphate. 208–210 (DYD) is a substrate binding site.

Belongs to the PNP/MTAP phosphorylase family. MTAP subfamily. As to quaternary structure, homohexamer. Dimer of a homotrimer.

The enzyme catalyses S-methyl-5'-thioadenosine + phosphate = 5-(methylsulfanyl)-alpha-D-ribose 1-phosphate + adenine. It participates in amino-acid biosynthesis; L-methionine biosynthesis via salvage pathway; S-methyl-5-thio-alpha-D-ribose 1-phosphate from S-methyl-5'-thioadenosine (phosphorylase route): step 1/1. Functionally, catalyzes the reversible phosphorylation of S-methyl-5'-thioadenosine (MTA) to adenine and 5-methylthioribose-1-phosphate. Involved in the breakdown of MTA, a major by-product of polyamine biosynthesis. Responsible for the first step in the methionine salvage pathway after MTA has been generated from S-adenosylmethionine. Has broad substrate specificity with 6-aminopurine nucleosides as preferred substrates. The polypeptide is S-methyl-5'-thioadenosine phosphorylase (Koribacter versatilis (strain Ellin345)).